Here is a 467-residue protein sequence, read N- to C-terminus: Peptidoglycan-N-acetylmuramic acid deacetylase PdaC (467 aa).

The helical transmembrane segment at 6–26 (IKWFHVLIAVVCVVGLIGFFH) threads the bilayer. One can recognise a NodB homology domain in the interval 278 to 452 (KVIALTFDDG…KLTDQGYQLV (175 aa)). The active-site Proton acceptor is Asp-285. A divalent metal cation contacts are provided by Asp-286, His-336, and His-340. The Proton donor role is filled by His-427.

This sequence in the N-terminal section; belongs to the RsiV family. The protein in the C-terminal section; belongs to the polysaccharide deacetylase family.

It localises to the cell membrane. Activated by divalent metal cations; Mn(2+) is the most efficient, followed by Ca(2+) and Mg(2+). In contrast to PgdA from S.pneumoniae, these ions are not absolutely required for deacetylase activity. In terms of biological role, catalyzes the deacetylation of N-acetylmuramic acid (MurNAc) residues in peptidoglycan, a modification that confers resistance to lysosyme. Is not able to deacetylate N-acetylglucosamine (GlcNAc) residues in peptidoglycan, but can deacylate chitin oligomers such as GlcNAc4 and GlcNAc5. Is essentially not active toward chitosan (partially deacetylated GlcNAc polymer) and has very low activity toward chitin (GlcNAc polymer). Does not deacetylate GlcNAc. The protein is Peptidoglycan-N-acetylmuramic acid deacetylase PdaC (pdaC) of Bacillus subtilis (strain 168).